Here is a 319-residue protein sequence, read N- to C-terminus: Transaldolase (319 aa).

K125 acts as the Schiff-base intermediate with substrate in catalysis.

The protein belongs to the transaldolase family. Type 1 subfamily. As to quaternary structure, homodimer.

The protein resides in the cytoplasm. The enzyme catalyses D-sedoheptulose 7-phosphate + D-glyceraldehyde 3-phosphate = D-erythrose 4-phosphate + beta-D-fructose 6-phosphate. It participates in carbohydrate degradation; pentose phosphate pathway; D-glyceraldehyde 3-phosphate and beta-D-fructose 6-phosphate from D-ribose 5-phosphate and D-xylulose 5-phosphate (non-oxidative stage): step 2/3. In terms of biological role, transaldolase is important for the balance of metabolites in the pentose-phosphate pathway. The chain is Transaldolase from Ralstonia pickettii (strain 12J).